Here is a 556-residue protein sequence, read N- to C-terminus: 2-succinyl-5-enolpyruvyl-6-hydroxy-3-cyclohexene-1-carboxylate synthase (556 aa).

It belongs to the TPP enzyme family. MenD subfamily. As to quaternary structure, homodimer. The cofactor is Mg(2+). It depends on Mn(2+) as a cofactor. Requires thiamine diphosphate as cofactor.

The catalysed reaction is isochorismate + 2-oxoglutarate + H(+) = 5-enolpyruvoyl-6-hydroxy-2-succinyl-cyclohex-3-ene-1-carboxylate + CO2. Its pathway is quinol/quinone metabolism; 1,4-dihydroxy-2-naphthoate biosynthesis; 1,4-dihydroxy-2-naphthoate from chorismate: step 2/7. It functions in the pathway quinol/quinone metabolism; menaquinone biosynthesis. Functionally, catalyzes the thiamine diphosphate-dependent decarboxylation of 2-oxoglutarate and the subsequent addition of the resulting succinic semialdehyde-thiamine pyrophosphate anion to isochorismate to yield 2-succinyl-5-enolpyruvyl-6-hydroxy-3-cyclohexene-1-carboxylate (SEPHCHC). This chain is 2-succinyl-5-enolpyruvyl-6-hydroxy-3-cyclohexene-1-carboxylate synthase, found in Escherichia coli (strain K12 / MC4100 / BW2952).